Consider the following 386-residue polypeptide: Innexin unc-9 (386 aa).

Transmembrane regions (helical) follow at residues 33 to 53, 103 to 123, 197 to 217, and 282 to 302; these read TAII…GFPI, QWVP…TIVW, FLYI…IFLL, and IFLF…CSLF.

Belongs to the pannexin family. Heterooligomer of unc-7 and unc-9. Interacts with F-actin. In terms of tissue distribution, expressed in PLM neurons (at protein level). Expressed in the nerve ring.

Its subcellular location is the cell membrane. The protein resides in the cell junction. The protein localises to the gap junction. In terms of biological role, structural component of gap junctions. Plays a role in maintaining gap junction activity to promote locomotion. The sequence is that of Innexin unc-9 from Caenorhabditis elegans.